Consider the following 34-residue polypeptide: MEVNILAFIATALFILIPTAFLLILYVQTASQGS.

A helical membrane pass occupies residues 5–25; the sequence is ILAFIATALFILIPTAFLLIL.

It belongs to the PsbM family. As to quaternary structure, PSII is composed of 1 copy each of membrane proteins PsbA, PsbB, PsbC, PsbD, PsbE, PsbF, PsbH, PsbI, PsbJ, PsbK, PsbL, PsbM, PsbT, PsbX, PsbY, PsbZ, Psb30/Ycf12, at least 3 peripheral proteins of the oxygen-evolving complex and a large number of cofactors. It forms dimeric complexes.

It is found in the plastid. The protein localises to the chloroplast thylakoid membrane. One of the components of the core complex of photosystem II (PSII). PSII is a light-driven water:plastoquinone oxidoreductase that uses light energy to abstract electrons from H(2)O, generating O(2) and a proton gradient subsequently used for ATP formation. It consists of a core antenna complex that captures photons, and an electron transfer chain that converts photonic excitation into a charge separation. This subunit is found at the monomer-monomer interface. This Anthoceros angustus (Hornwort) protein is Photosystem II reaction center protein M.